Reading from the N-terminus, the 113-residue chain is Large ribosomal subunit protein bL19 (113 aa).

Belongs to the bacterial ribosomal protein bL19 family.

Functionally, this protein is located at the 30S-50S ribosomal subunit interface and may play a role in the structure and function of the aminoacyl-tRNA binding site. In Corynebacterium jeikeium (strain K411), this protein is Large ribosomal subunit protein bL19.